The chain runs to 288 residues: MNNLSFSELCCLFCCPPCPGKIASKLAFLPPDPTYTLMCDESGSRWTLHLSERADWQYSSREKDAIECFMTRTSKGNRIACMFVRCSPNAKYTLLFSHGNAVDLGQMSSFYIGLGSRINCNIFSYDYSGYGASSGKPTEKNLYADVEAAWLALRTRYGIRPENVIIYGQSIGTVPSVDLAARYESAAVILHSPLTSGMRVAFPDTKKTYCFDAFPNIDKISKITSPVLIIHGTEDEVIDFSHGLALFERCQRPVEPLWVEGAGHNDVELYGQYLERLKQFVSQELVNL.

Catalysis depends on charge relay system residues S170, D235, and H264. S282 is modified (phosphoserine).

The protein belongs to the AB hydrolase superfamily. ABHD17 family. In terms of processing, palmitoylated on cysteine residues located in a cysteine cluster at the N-terminus which promotes membrane localization. Palmitoylation is required for post-synaptic localization and for depalmitoylating activity towards DLG4/PSD95. Expressed in brain.

It is found in the cell membrane. The protein resides in the recycling endosome membrane. Its subcellular location is the cell projection. It localises to the dendritic spine. The protein localises to the postsynaptic density membrane. The enzyme catalyses S-hexadecanoyl-L-cysteinyl-[protein] + H2O = L-cysteinyl-[protein] + hexadecanoate + H(+). Its function is as follows. Hydrolyzes fatty acids from S-acylated cysteine residues in proteins. Has depalmitoylating activity towards DLG4/PSD95. Has depalmitoylating activity towards GAP43. Has depalmitoylating activity towards MAP6. Has depalmitoylating activity towards NRAS. This Mus musculus (Mouse) protein is Alpha/beta hydrolase domain-containing protein 17B.